The following is a 630-amino-acid chain: 1-deoxy-D-xylulose-5-phosphate synthase (630 aa).

Thiamine diphosphate-binding positions include His72 and 113–115 (GHS). Position 144 (Asp144) interacts with Mg(2+). Residues 145–146 (GA), Asn173, Tyr284, and Glu367 contribute to the thiamine diphosphate site. Residue Asn173 participates in Mg(2+) binding.

This sequence belongs to the transketolase family. DXPS subfamily. In terms of assembly, homodimer. Requires Mg(2+) as cofactor. The cofactor is thiamine diphosphate.

The enzyme catalyses D-glyceraldehyde 3-phosphate + pyruvate + H(+) = 1-deoxy-D-xylulose 5-phosphate + CO2. It participates in metabolic intermediate biosynthesis; 1-deoxy-D-xylulose 5-phosphate biosynthesis; 1-deoxy-D-xylulose 5-phosphate from D-glyceraldehyde 3-phosphate and pyruvate: step 1/1. Its function is as follows. Catalyzes the acyloin condensation reaction between C atoms 2 and 3 of pyruvate and glyceraldehyde 3-phosphate to yield 1-deoxy-D-xylulose-5-phosphate (DXP). This is 1-deoxy-D-xylulose-5-phosphate synthase from Bacillus cytotoxicus (strain DSM 22905 / CIP 110041 / 391-98 / NVH 391-98).